We begin with the raw amino-acid sequence, 635 residues long: MALSMRKAIGVVKDQTSIGIAKVASNMAPDLEVAIVKATSHDDDQSSDKYIREILSLTSLSRGYVHACVTSVSRRLKKTRDWIVALKALMLVHRLLNEGDPLFQEEILYATRRGTRILNMSDFRDEAHSSSWDHSAFVRTYASYLDQRLELALFERRGRNGGGSSSSHQSNGDDGYNRSRDDFRSPPPRTYDYETGNGFGMPKRSRSFGDVNEIGAREEKKSVTPLREMTPERIFGKMGHLQRLLDRFLSCRPTGLAKNSRMILIAMYPVVKESFRLYADICEVLAVLLDKFFDMEYTDCVKAFDAYASAAKQIDELIAFYHWCKDTGVARSSEYPEVQRITSKLLETLEEFVRDRAKRAKSPERKEIEAPPAPAPPVEEPVDMNEIKALPPPENHTPPPPPAPEPKPQQPQVTDDLVNLREDDVSGDDQGNKFALALFAGPPANNGKWEAFSSDNNVTSAWQNPAAELGKADWELALVETASNLEHQKAAMGGGLDPLLLNGMYDQGAVRQHVSTSELTGGSSSSVALPLPGKVNSHILALPAPDGTVQKVNQDPFAASLTIPPPSYVQMAEMDKKQYLLTQEQQLWQQYQQEGMRGQASLAKMNTAQTAMPYGMPPVNGMGPSPMGYYYNNPY.

An ENTH domain is found at 23-159; sequence VASNMAPDLE…ELALFERRGR (137 aa). Residues 157–208 form a disordered region; that stretch reads RGRNGGGSSSSHQSNGDDGYNRSRDDFRSPPPRTYDYETGNGFGMPKRSRSF. Over residues 165-174 the composition is skewed to low complexity; that stretch reads SSSHQSNGDD. Basic and acidic residues predominate over residues 175–184; it reads GYNRSRDDFR. Position 207 is a phosphoserine (serine 207). Threonine 224 carries the post-translational modification Phosphothreonine. Over residues 357–369 the composition is skewed to basic and acidic residues; it reads AKRAKSPERKEIE. Residues 357–412 form a disordered region; the sequence is AKRAKSPERKEIEAPPAPAPPVEEPVDMNEIKALPPPENHTPPPPPAPEPKPQQPQ. Over residues 390-409 the composition is skewed to pro residues; sequence LPPPENHTPPPPPAPEPKPQ.

The protein localises to the membrane. It localises to the clathrin-coated pit. The protein resides in the golgi apparatus. It is found in the cytoplasmic vesicle. Its subcellular location is the clathrin-coated vesicle. The polypeptide is Probable clathrin assembly protein At4g32285 (Arabidopsis thaliana (Mouse-ear cress)).